The following is a 467-amino-acid chain: Xanthan biosynthesis protein XanB (467 aa).

This sequence belongs to the mannose-6-phosphate isomerase type 2 family.

It catalyses the reaction D-mannose 6-phosphate = D-fructose 6-phosphate. The catalysed reaction is alpha-D-mannose 1-phosphate + GTP + H(+) = GDP-alpha-D-mannose + diphosphate. It participates in nucleotide-sugar biosynthesis; GDP-alpha-D-mannose biosynthesis; GDP-alpha-D-mannose from alpha-D-mannose 1-phosphate (GTP route): step 1/1. The protein operates within nucleotide-sugar biosynthesis; GDP-alpha-D-mannose biosynthesis; alpha-D-mannose 1-phosphate from D-fructose 6-phosphate: step 1/2. Functionally, involved in xanthan production. The chain is Xanthan biosynthesis protein XanB (xanB) from Xanthomonas campestris pv. campestris (strain B100).